Reading from the N-terminus, the 95-residue chain is Small ribosomal subunit protein bS6 (95 aa).

It belongs to the bacterial ribosomal protein bS6 family.

Its function is as follows. Binds together with bS18 to 16S ribosomal RNA. The polypeptide is Small ribosomal subunit protein bS6 (Oceanobacillus iheyensis (strain DSM 14371 / CIP 107618 / JCM 11309 / KCTC 3954 / HTE831)).